The sequence spans 119 residues: MKKIAFIFTKTPHGDAGGREGLDALLATSALTEKVGVFFISDGVLQLLPNQQPDRILARNYIATFKVLPLYDIEECYLCQEDLVMRGLSSVNHFVLDAKVIPAETIREKLVDYDVVLTF.

Belongs to the DsrF/TusC family. As to quaternary structure, heterohexamer, formed by a dimer of trimers. The hexameric TusBCD complex contains 2 copies each of TusB, TusC and TusD. The TusBCD complex interacts with TusE.

It is found in the cytoplasm. Functionally, part of a sulfur-relay system required for 2-thiolation of 5-methylaminomethyl-2-thiouridine (mnm(5)s(2)U) at tRNA wobble positions. This Photorhabdus laumondii subsp. laumondii (strain DSM 15139 / CIP 105565 / TT01) (Photorhabdus luminescens subsp. laumondii) protein is Protein TusC.